A 332-amino-acid polypeptide reads, in one-letter code: Long form salivary protein D7L1 (332 aa).

The signal sequence occupies residues 1–21; that stretch reads MHSPKSFLLLAVVFVALRVTA. Disulfide bonds link C40–C77 and C73–C133. W61 is a leukotriene E4 binding site. K176 is a binding site for leukotriene E4. Cystine bridges form between C184–C219, C200–C331, and C259–C278. Noradrenaline-binding residues include E185 and R203. D294 and E297 together coordinate noradrenaline.

The protein belongs to the PBP/GOBP family. As to expression, female mosquito salivary gland (at protein level).

It is found in the secreted. In terms of biological role, modulates blood feeding of female mosquitoes on vertebrate species by binding and sequestering different mediators involved in the host response, such as biogenic amines and eicosanoids. Binds dopamine, serotonin, histamine, tryptamine, adrenaline, noradrenaline, leukotriene B4, leukotriene C4, leukotriene D4, leukotriene E4 and U-46619, a stable analog of thromboxane A2. Inhibits platelet aggregation induced by serotonin and low doses of thromboxane A2 analog U-46619 but not by high doses of U-46619, collagen or ADP. Prevents leukocyte recruitment. In Aedes albopictus (Asian tiger mosquito), this protein is Long form salivary protein D7L1.